The sequence spans 76 residues: Protein CASC2, isoforms 1/2 (76 aa).

Residues 1 to 20 (MAGTRGLMLLGPGPVAGPRD) form a disordered region.

The sequence is that of Protein CASC2, isoforms 1/2 (CASC2) from Homo sapiens (Human).